We begin with the raw amino-acid sequence, 442 residues long: Meiotically up-regulated gene 191 protein (442 aa).

Thr-361 is modified (phosphothreonine). The segment covering 416–429 (RNNPSSGESTTLPQ) has biased composition (polar residues). The interval 416 to 442 (RNNPSSGESTTLPQPSHGKKDKDCVIS) is disordered. A compositionally biased stretch (basic and acidic residues) spans 433-442 (GKKDKDCVIS).

The protein localises to the cytoplasm. It localises to the nucleus. Its function is as follows. Has a role in meiosis. The chain is Meiotically up-regulated gene 191 protein (mug191) from Schizosaccharomyces pombe (strain 972 / ATCC 24843) (Fission yeast).